Consider the following 628-residue polypeptide: Exonuclease V, mitochondrial (628 aa).

The N-terminal 21 residues, 1 to 21, are a transit peptide targeting the mitochondrion; sequence MSRFWHFKKFYFTSCYSMQRM. Residues 37–58 are disordered; sequence TSEHEQVQSISKEESRSLSSND. The span at 38–52 shows a compositional bias: basic and acidic residues; sequence SEHEQVQSISKEESR. [4Fe-4S] cluster-binding residues include Cys-164, Cys-586, Cys-589, and Cys-595.

This sequence belongs to the EXO5 family. As to quaternary structure, monomer. The cofactor is Mg(2+). [4Fe-4S] cluster serves as cofactor.

The protein localises to the mitochondrion. Single strand DNA specific 5' exonuclease involved in mitochondrial DNA replication and recombination. Releases dinucleotides as main products of catalysis. Has the capacity to slide across 5'double-stranded DNA or 5'RNA sequences and resumes cutting two nucleotides downstream of the double-stranded-to-single-stranded junction or RNA-to-DNA junction, respectively. The chain is Exonuclease V, mitochondrial (DEM1) from Candida albicans (strain SC5314 / ATCC MYA-2876) (Yeast).